A 279-amino-acid chain; its full sequence is Thymidylate synthase (279 aa).

Arg21 serves as a coordination point for dUMP. (6R)-5,10-methylene-5,6,7,8-tetrahydrofolate is bound at residue His51. 126–127 (RR) serves as a coordination point for dUMP. Cys159 functions as the Nucleophile in the catalytic mechanism. DUMP contacts are provided by residues 179–182 (RSAD), Asn190, and 220–222 (HLY). Asp182 serves as a coordination point for (6R)-5,10-methylene-5,6,7,8-tetrahydrofolate. Ala278 contributes to the (6R)-5,10-methylene-5,6,7,8-tetrahydrofolate binding site.

It belongs to the thymidylate synthase family. Bacterial-type ThyA subfamily. In terms of assembly, homodimer.

The protein resides in the cytoplasm. The enzyme catalyses dUMP + (6R)-5,10-methylene-5,6,7,8-tetrahydrofolate = 7,8-dihydrofolate + dTMP. The protein operates within pyrimidine metabolism; dTTP biosynthesis. Catalyzes the reductive methylation of 2'-deoxyuridine-5'-monophosphate (dUMP) to 2'-deoxythymidine-5'-monophosphate (dTMP) while utilizing 5,10-methylenetetrahydrofolate (mTHF) as the methyl donor and reductant in the reaction, yielding dihydrofolate (DHF) as a by-product. This enzymatic reaction provides an intracellular de novo source of dTMP, an essential precursor for DNA biosynthesis. In Marinobacter nauticus (strain ATCC 700491 / DSM 11845 / VT8) (Marinobacter aquaeolei), this protein is Thymidylate synthase.